Reading from the N-terminus, the 406-residue chain is Phosphorylase b kinase gamma catalytic chain, liver/testis isoform (406 aa).

Positions 24–291 (YDPKDIIGRG…AEQALQHPFF (268 aa)) constitute a Protein kinase domain. Residues 30-38 (IGRGVSSVV) and lysine 53 each bind ATP. Aspartate 153 (proton acceptor) is an active-site residue. The segment at 306-330 (QRFRVAVWTILAAGRVALSSHRLRP) is calmodulin-binding (domain-N). Residues 346 to 370 (VRRLIDNCAFRLYGHWVKKGEQQNR) are calmodulin-binding (domain-C).

Belongs to the protein kinase superfamily. CAMK Ser/Thr protein kinase family. Hexadecamer of 4 heterotetramers, each composed of alpha, beta, gamma, and delta subunits. Alpha (PHKA1 or PHKA2) and beta (PHKB) are regulatory subunits, gamma (PHKG1 or PHKG2) is the catalytic subunit, and delta is calmodulin.

It carries out the reaction 2 ATP + phosphorylase b = 2 ADP + phosphorylase a.. In terms of biological role, catalytic subunit of the phosphorylase b kinase (PHK), which mediates the neural and hormonal regulation of glycogen breakdown (glycogenolysis) by phosphorylating and thereby activating glycogen phosphorylase. May regulate glycogeneolysis in the testis. In vitro, phosphorylates PYGM. This chain is Phosphorylase b kinase gamma catalytic chain, liver/testis isoform (Phkg2), found in Mus musculus (Mouse).